Here is a 586-residue protein sequence, read N- to C-terminus: Kelch-like protein 7 (586 aa).

A BTB domain is found at 44–111 (CDVILTVQER…AYTARISVNS (68 aa)). Residues 146–248 (CLGISVLAEC…SKNFLSKTVQ (103 aa)) form the BACK domain. Kelch repeat units lie at residues 294-336 (RIAL…FWDN), 337-382 (VVYI…AAEG), 383-430 (KIYT…EANG), 431-481 (LIYV…FVKD), 483-528 (IFAV…AVGS), and 530-575 (IYVL…CVVD).

Homodimer. Component of the BCR(KLHL7) E3 ubiquitin ligase complex, at least composed of CUL3 and KLHL7 and RBX1.

The protein resides in the nucleus. It is found in the cytoplasm. It functions in the pathway protein modification; protein ubiquitination. Functionally, substrate-specific adapter of a BCR (BTB-CUL3-RBX1) E3 ubiquitin ligase complex. The BCR(KLHL7) complex acts by mediating ubiquitination and subsequent degradation of substrate proteins. Probably mediates 'Lys-48'-linked ubiquitination. This Mus musculus (Mouse) protein is Kelch-like protein 7 (Klhl7).